Reading from the N-terminus, the 400-residue chain is Na(+)/H(+) antiporter NhaA 1 (400 aa).

Transmembrane regions (helical) follow at residues 25–45 (IVLM…FSSM), 67–87 (ILHW…GMEI), 103–123 (ILPV…YALF), 130–150 (IIGW…ILSL), 159–179 (IIIF…IVIA), 184–204 (SEIS…IILA), 213–233 (WLYI…GVHE), 264–284 (VLTP…NSGI), 303–323 (IIFG…YILV), 339–359 (LYGA…VSSL), and 372–392 (ISII…FKII).

It belongs to the NhaA Na(+)/H(+) (TC 2.A.33) antiporter family.

It localises to the cell membrane. It catalyses the reaction Na(+)(in) + 2 H(+)(out) = Na(+)(out) + 2 H(+)(in). Functionally, na(+)/H(+) antiporter that extrudes sodium in exchange for external protons. The chain is Na(+)/H(+) antiporter NhaA 1 from Clostridium beijerinckii (strain ATCC 51743 / NCIMB 8052) (Clostridium acetobutylicum).